Consider the following 207-residue polypeptide: Alpha-1-acid glycoprotein 2 (207 aa).

The signal sequence occupies residues 1-18; it reads MALHMILVMVSLLPLLEA. Q19 is modified (pyrrolidone carboxylic acid). Residues N25, N34, N76, N94, and N104 are each glycosylated (N-linked (GlcNAc...) asparagine). Residues C91 and C184 are joined by a disulfide bond. Residues 188 to 207 form a disordered region; sequence EKQQLELEKETKKDPEEGQA.

It belongs to the calycin superfamily. Lipocalin family. Expressed by the liver and secreted in plasma.

Its subcellular location is the secreted. In terms of biological role, functions as a transport protein in the blood stream. Binds various ligands in the interior of its beta-barrel domain. Appears to function in modulating the activity of the immune system during the acute-phase reaction. This Mus musculus (Mouse) protein is Alpha-1-acid glycoprotein 2 (Orm2).